A 179-amino-acid chain; its full sequence is Transcription factor 21 (179 aa).

The segment at 23–87 (IKLDPNKEFG…QVQRNAANAR (65 aa)) is disordered. Residues 34–46 (SNDSNEESSTCDN) are compositionally biased toward polar residues. Residues 50-64 (KKGRGTSGKRRKAPS) show a composition bias toward basic residues. A compositionally biased stretch (polar residues) spans 70–80 (GNINQEGKQVQ). Residues 79-131 (VQRNAANARERARMRVLSKAFSRLKTTLPWVPPDTKLSKLDTLRLASSYIAHL) enclose the bHLH domain.

In terms of assembly, efficient DNA binding requires dimerization with another bHLH protein.

The protein localises to the nucleus. Involved in epithelial-mesenchymal interactions in kidney and lung morphogenesis that include epithelial differentiation and branching morphogenesis. In Xenopus tropicalis (Western clawed frog), this protein is Transcription factor 21 (tcf21).